An 82-amino-acid polypeptide reads, in one-letter code: U1-theraphotoxin-Ct1b (82 aa).

The N-terminal stretch at 1–23 is a signal peptide; the sequence is MRTFTLIAILTCALLVIYHAAEA. Residues 24–44 constitute a propeptide that is removed on maturation; the sequence is EELEAKDVIESKALATLDEER.

It belongs to the neurotoxin 12 (Hwtx-2) family. 03 (juruin) subfamily. In terms of processing, contains 3 disulfide bonds. Two different connectivities are observed in similar proteins (C1-C3, C2-C5, C4-C6 or C1-C4, C2-C5, C3-C6). As to expression, expressed by the venom gland.

The protein resides in the secreted. Its function is as follows. This toxin causes paralysis and death to sheep blowflies. It does not target insect sodium channels. The sequence is that of U1-theraphotoxin-Ct1b from Coremiocnemis tropix (Australian tarantula spider).